We begin with the raw amino-acid sequence, 506 residues long: Glycerol kinase (506 aa).

Residue Thr14 coordinates ADP. 3 residues coordinate ATP: Thr14, Thr15, and Ser16. Thr14 provides a ligand contact to sn-glycerol 3-phosphate. Arg18 provides a ligand contact to ADP. Sn-glycerol 3-phosphate contacts are provided by Arg84, Glu85, and Tyr136. Glycerol-binding residues include Arg84, Glu85, and Tyr136. His232 carries the post-translational modification Phosphohistidine; by HPr. Position 246 (Asp246) interacts with sn-glycerol 3-phosphate. Glycerol-binding residues include Asp246 and Gln247. ADP is bound by residues Thr268 and Gly311. Thr268, Gly311, Gln315, and Gly412 together coordinate ATP. Gly412 and Asn416 together coordinate ADP.

This sequence belongs to the FGGY kinase family. In terms of assembly, homotetramer and homodimer (in equilibrium). The phosphoenolpyruvate-dependent sugar phosphotransferase system (PTS), including enzyme I, and histidine-containing protein (HPr) are required for the phosphorylation of His-232, which leads to the activation of the enzyme.

It catalyses the reaction glycerol + ATP = sn-glycerol 3-phosphate + ADP + H(+). The protein operates within polyol metabolism; glycerol degradation via glycerol kinase pathway; sn-glycerol 3-phosphate from glycerol: step 1/1. With respect to regulation, activated by phosphorylation and inhibited by fructose 1,6-bisphosphate (FBP). Functionally, key enzyme in the regulation of glycerol uptake and metabolism. Catalyzes the phosphorylation of glycerol to yield sn-glycerol 3-phosphate. This chain is Glycerol kinase, found in Enterococcus casseliflavus (Enterococcus flavescens).